The primary structure comprises 211 residues: Thymidylate kinase (211 aa).

Residue 10–17 participates in ATP binding; the sequence is GPDGAGKT.

Belongs to the thymidylate kinase family.

It catalyses the reaction dTMP + ATP = dTDP + ADP. Its function is as follows. Phosphorylation of dTMP to form dTDP in both de novo and salvage pathways of dTTP synthesis. In Lactococcus lactis subsp. cremoris (strain MG1363), this protein is Thymidylate kinase.